The following is a 362-amino-acid chain: Meiotic recombination protein SPO11-1 (362 aa).

Residues 8–142 (SESTNLLQRI…LNVVSVGNGL (135 aa)) enclose the Topo IIA-type catalytic domain. Residue Y103 is the O-(5'-phospho-DNA)-tyrosine intermediate of the active site. E189 and D241 together coordinate Mg(2+).

Belongs to the TOP6A family. In terms of assembly, heterotetramer of 2 SPO11 (SPO11-1 and/or SPO11-2) and 2 MTOPVIB chains. Interacts with MTOPVIB. May form a heterodimer with SPO11-2. Interacts with PRD1. Does not interact with TOP6B. Mg(2+) is required as a cofactor. As to expression, expressed in shoots, young seedlings, flowers and reproductive tissues. Not found in roots or rosette leaves.

The protein resides in the nucleus. It carries out the reaction ATP-dependent breakage, passage and rejoining of double-stranded DNA.. In terms of biological role, component of a topoisomerase 6 complex specifically required for meiotic recombination. Together with MTOPVIB, mediates DNA cleavage that forms the double-strand breaks (DSB) that initiate meiotic recombination. The complex promotes relaxation of negative and positive supercoiled DNA and DNA decatenation through cleavage and ligation cycles. This chain is Meiotic recombination protein SPO11-1, found in Arabidopsis thaliana (Mouse-ear cress).